The sequence spans 287 residues: 4-hydroxybenzoate octaprenyltransferase (287 aa).

Helical transmembrane passes span 19–39 (PIGT…ASSG), 43–63 (LQML…GCAI), 94–114 (VVVA…LNIF), 118–138 (LSVL…FLAI), 142–162 (VLGI…LDFI), 167–187 (WVLF…YAMV), 209–229 (VLAI…VAHL), 235–255 (YFLI…KLVS), and 263–283 (FLAF…IVLG).

Belongs to the UbiA prenyltransferase family. The cofactor is Mg(2+).

Its subcellular location is the cell inner membrane. It catalyses the reaction all-trans-octaprenyl diphosphate + 4-hydroxybenzoate = 4-hydroxy-3-(all-trans-octaprenyl)benzoate + diphosphate. The protein operates within cofactor biosynthesis; ubiquinone biosynthesis. In terms of biological role, catalyzes the prenylation of para-hydroxybenzoate (PHB) with an all-trans polyprenyl group. Mediates the second step in the final reaction sequence of ubiquinone-8 (UQ-8) biosynthesis, which is the condensation of the polyisoprenoid side chain with PHB, generating the first membrane-bound Q intermediate 3-octaprenyl-4-hydroxybenzoate. The sequence is that of 4-hydroxybenzoate octaprenyltransferase from Polynucleobacter asymbioticus (strain DSM 18221 / CIP 109841 / QLW-P1DMWA-1) (Polynucleobacter necessarius subsp. asymbioticus).